A 451-amino-acid chain; its full sequence is Rab GDP-dissociation inhibitor (451 aa).

Interaction with YPT1 stretches follow at residues 106–112 (RYVDFKQ) and 234–259 (YPMYGLGELPQGFARLSAIYGGTYML).

Belongs to the Rab GDI family. As to quaternary structure, interacts with the GDP-bound form of Rab GTPase YPT1. Interacts with YPT10.

The protein resides in the cytoplasm. Functionally, regulates the GDP/GTP exchange reaction of SEC4 by inhibiting the dissociation of GDP from it, and the subsequent binding of GTP to SEC4. Plays an essential role in the yeast secretory pathway. Extracts GDP-bound YPT7 from vacuolar membranes, antagonizing vacuolar membrane fusion. In Saccharomyces cerevisiae (strain ATCC 204508 / S288c) (Baker's yeast), this protein is Rab GDP-dissociation inhibitor (GDI1).